The following is a 501-amino-acid chain: MAQALPWLLLWMGAGVLPAHGTQHGIRLPLRSGLGGAPLGLRLPRETDEEPEEPGRRGSFVEMVDNLRGKSGQGYYVEMTVGSPPQTLNILVDTGSSNFAVGAAPHPFLHRYYQRQLSSTYRDLRKGVYVPYTQGKWEGELGTDLVSIPHGPNVTVRANIAAITESDKFFINGSNWEGILGLAYAEIARPDDSLEPFFDSLVKQTHVPNLFSLQLCGAGFPLNQSEVLASVGGSMIIGGIDHSLYTGSLWYTPIRREWYYEVIIVRVEINGQDLKMDCKEYNYDKSIVDSGTTNLRLPKKVFEAAVKSIKAASSTEKFPDGFWLGEQLVCWQAGTTPWNIFPVISLYLMGEVTNQSFRITILPQQYLRPVEDVATSQDDCYKFAISQSSTGTVMGAVIMEGFYVVFDRARKRIGFAVSACHVHDEFRTAAVEGPFVTLDMEDCGYNIPQTDESTLMTIAYVMAAICALFMLPLCLMVCQWRCLRCLRQQHDDFADDISLLK.

The first 21 residues, 1 to 21, serve as a signal peptide directing secretion; sequence MAQALPWLLLWMGAGVLPAHG. The propeptide occupies 22–45; that stretch reads TQHGIRLPLRSGLGGAPLGLRLPR. Over 22–457 the chain is Extracellular; that stretch reads TQHGIRLPLR…PQTDESTLMT (436 aa). The segment at 39 to 58 is disordered; sequence LGLRLPRETDEEPEEPGRRG. One can recognise a Peptidase A1 domain in the interval 75 to 416; that stretch reads YYVEMTVGSP…DRARKRIGFA (342 aa). Asp93 is an active-site residue. Position 126 is an N6-acetyllysine (Lys126). Asn153, Asn172, and Asn223 each carry an N-linked (GlcNAc...) asparagine glycan. 3 cysteine pairs are disulfide-bonded: Cys216/Cys420, Cys278/Cys443, and Cys330/Cys380. 3 positions are modified to N6-acetyllysine: Lys275, Lys279, and Lys285. Residue Asp289 is part of the active site. 3 positions are modified to N6-acetyllysine: Lys299, Lys300, and Lys307. The N-linked (GlcNAc...) asparagine glycan is linked to Asn354. A helical transmembrane segment spans residues 458–478; that stretch reads IAYVMAAICALFMLPLCLMVC. Residues Cys474, Cys478, Cys482, and Cys485 are each lipidated (S-palmitoyl cysteine). The Cytoplasmic portion of the chain corresponds to 479–501; sequence QWRCLRCLRQQHDDFADDISLLK. Residues 479–501 form an interaction with RTN3 region; that stretch reads QWRCLRCLRQQHDDFADDISLLK. Positions 496–500 match the DXXLL motif; sequence DISLL. Ser498 is modified (phosphoserine). Lys501 participates in a covalent cross-link: Glycyl lysine isopeptide (Lys-Gly) (interchain with G-Cter in ubiquitin).

Belongs to the peptidase A1 family. Monomer. Interacts (via DXXLL motif) with GGA1, GGA2 and GGA3 (via their VHS domain); the interaction highly increases when BACE1 is phosphorylated at Ser-498. Interacts with RTN1; RTN2; RTN3 and RTN4; the interaction leads to inhibition of amyloid precursor protein processing. Interacts with SNX6. Interacts with PCSK9. Interacts with NAT8 and NAT8B. Interacts with BIN1. Interacts (via extracellular domain) with ADAM10 (via extracellular domain). Interacts with SORL1; this interaction may affect binding with APP and hence reduce APP cleavage. Interacts with NRDC AND NRG1. N-Glycosylated. Addition of a bisecting N-acetylglucosamine by MGAT3 blocks lysosomal targeting, further degradation and is required for maintaining stability under stress conditions. In terms of processing, acetylated in the endoplasmic reticulum at Lys-126, Lys-275, Lys-279, Lys-285, Lys-299, Lys-300 and Lys-307. Acetylation by NAT8 and NAT8B is transient and deacetylation probably occurs in the Golgi. Acetylation regulates the maturation, the transport to the plasma membrane, the stability and the expression of the protein. Post-translationally, palmitoylation mediates lipid raft localization. Ubiquitinated at Lys-501, ubiquitination leads to lysosomal degradation. Monoubiquitinated and 'Lys-63'-linked polyubitinated. Deubiquitnated by USP8; inhibits lysosomal degradation. In terms of processing, phosphorylation at Ser-498 is required for interaction with GGA1 and retrograded transport from endosomal compartments to the trans-Golgi network. Non-phosphorylated BACE1 enters a direct recycling route to the cell surface. As to expression, expressed at high levels in the brain and pancreas. In the brain, expression is highest in the substantia nigra, locus coruleus and medulla oblongata.

Its subcellular location is the cell membrane. It localises to the golgi apparatus. The protein localises to the trans-Golgi network. It is found in the endoplasmic reticulum. The protein resides in the endosome. Its subcellular location is the cell surface. It localises to the cytoplasmic vesicle membrane. The protein localises to the membrane raft. It is found in the lysosome. The protein resides in the late endosome. Its subcellular location is the early endosome. It localises to the recycling endosome. The protein localises to the cell projection. It is found in the axon. The protein resides in the dendrite. It catalyses the reaction Broad endopeptidase specificity. Cleaves Glu-Val-Asn-Leu-|-Asp-Ala-Glu-Phe in the Swedish variant of Alzheimer's amyloid precursor protein.. With respect to regulation, inhibited by RTN3 and RTN4. Its function is as follows. Responsible for the proteolytic processing of the amyloid precursor protein (APP). Cleaves at the N-terminus of the A-beta peptide sequence, between residues 671 and 672 of APP, leads to the generation and extracellular release of beta-cleaved soluble APP, and a corresponding cell-associated C-terminal fragment which is later released by gamma-secretase. Cleaves CHL1. This chain is Beta-secretase 1, found in Homo sapiens (Human).